A 441-amino-acid chain; its full sequence is Trigger factor (441 aa).

A PPIase FKBP-type domain is found at 161 to 246 (GDKVTIDFLG…VHEVLGEKLP (86 aa)).

It belongs to the FKBP-type PPIase family. Tig subfamily.

Its subcellular location is the cytoplasm. The enzyme catalyses [protein]-peptidylproline (omega=180) = [protein]-peptidylproline (omega=0). In terms of biological role, involved in protein export. Acts as a chaperone by maintaining the newly synthesized protein in an open conformation. Functions as a peptidyl-prolyl cis-trans isomerase. In Teredinibacter turnerae (strain ATCC 39867 / T7901), this protein is Trigger factor.